The primary structure comprises 165 residues: Regulator of sigma D (165 aa).

Belongs to the Rsd/AlgQ family. Interacts with RpoD.

Its subcellular location is the cytoplasm. Binds RpoD and negatively regulates RpoD-mediated transcription activation by preventing the interaction between the primary sigma factor RpoD with the catalytic core of the RNA polymerase and with promoter DNA. May be involved in replacement of the RNA polymerase sigma subunit from RpoD to RpoS during the transition from exponential growth to the stationary phase. The sequence is that of Regulator of sigma D from Enterobacter sp. (strain 638).